Reading from the N-terminus, the 483-residue chain is RNA-binding protein Nova-1 (483 aa).

The tract at residues 1 to 44 is disordered; sequence MMAAAPIQQNGTHTGVPIDLDPPDSRKRPLEAPPEAGSTKRTNT. Residues 27-43 carry the Bipartite nuclear localization signal motif; it reads KRPLEAPPEAGSTKRTN. KH domains follow at residues 49 to 116, 147 to 213, and 397 to 464; these read QYFL…HGFI, IKQV…VELI, and KDVV…QYLI. Positions 395-479 are required for RNA binding; that stretch reads GSKDVVEIAV…YEQGVRAANP (85 aa).

As to quaternary structure, interacts with PTBP2; the interaction is direct.

It localises to the nucleus. Functions to regulate alternative splicing in neurons by binding pre-mRNA in a sequence-specific manner to activate exon inclusion or exclusion. It binds specifically to the sequences 5'-YCAY-3' and regulates splicing in only a subset of regulated exons. Binding to an exonic 5'-YCAY-3' cluster changes the protein complexes assembled on pre-mRNA, blocking U1 snRNP binding and exon inclusion, whereas binding to an intronic 5'-YCAY-3' cluster enhances spliceosome assembly and exon inclusion. Binding to 5'-YCAY-3' clusters results in a local and asymmetric action to regulate spliceosome assembly and alternative splicing in neurons. Binding to an exonic 5'-YCAY-3' cluster changed the protein complexes assembled on pre-mRNA, blocking U1 snRNP (small nuclear ribonucleoprotein) binding and exon inclusion, whereas binding to an intronic 5'-YCAY-3' cluster enhanced spliceosome assembly and exon inclusion. With NOVA1, they perform unique biological functions in different brain areas and cell types. Autoregulates its own expression by acting as a splicing repressor. Acts to activate the inclusion of exon E3A in the glycine receptor alpha-2 chain and of exon E9 in gamma-aminobutyric-acid receptor gamma-2 subunit via a distal downstream UCAU-rich intronic splicing enhancer. Acts to regulate a novel glycine receptor alpha-2 chain splice variant (alpha-2N) in developing spinal cord. This chain is RNA-binding protein Nova-1 (NOVA1), found in Macaca fascicularis (Crab-eating macaque).